Consider the following 152-residue polypeptide: Endoribonuclease YbeY (152 aa).

Residues H118, H122, and H128 each contribute to the Zn(2+) site.

It belongs to the endoribonuclease YbeY family. Zn(2+) serves as cofactor.

It localises to the cytoplasm. Single strand-specific metallo-endoribonuclease involved in late-stage 70S ribosome quality control and in maturation of the 3' terminus of the 16S rRNA. The polypeptide is Endoribonuclease YbeY (Lacticaseibacillus paracasei (strain ATCC 334 / BCRC 17002 / CCUG 31169 / CIP 107868 / KCTC 3260 / NRRL B-441) (Lactobacillus paracasei)).